The sequence spans 1404 residues: DNA-directed RNA polymerase subunit beta' (1404 aa).

Residues Cys-70, Cys-72, Cys-85, and Cys-88 each coordinate Zn(2+). Asp-460, Asp-462, and Asp-464 together coordinate Mg(2+). Zn(2+) contacts are provided by Cys-814, Cys-888, Cys-895, and Cys-898.

This sequence belongs to the RNA polymerase beta' chain family. The RNAP catalytic core consists of 2 alpha, 1 beta, 1 beta' and 1 omega subunit. When a sigma factor is associated with the core the holoenzyme is formed, which can initiate transcription. Requires Mg(2+) as cofactor. It depends on Zn(2+) as a cofactor.

The enzyme catalyses RNA(n) + a ribonucleoside 5'-triphosphate = RNA(n+1) + diphosphate. DNA-dependent RNA polymerase catalyzes the transcription of DNA into RNA using the four ribonucleoside triphosphates as substrates. The chain is DNA-directed RNA polymerase subunit beta' from Shewanella pealeana (strain ATCC 700345 / ANG-SQ1).